The chain runs to 612 residues: Dihydroxy-acid dehydratase (612 aa).

Asp-81 is a Mg(2+) binding site. Cys-122 is a [2Fe-2S] cluster binding site. Positions 123 and 124 each coordinate Mg(2+). Lys-124 is subject to N6-carboxylysine. Cys-193 serves as a coordination point for [2Fe-2S] cluster. Position 489 (Glu-489) interacts with Mg(2+). Ser-515 acts as the Proton acceptor in catalysis.

It belongs to the IlvD/Edd family. As to quaternary structure, homodimer. It depends on [2Fe-2S] cluster as a cofactor. The cofactor is Mg(2+).

It catalyses the reaction (2R)-2,3-dihydroxy-3-methylbutanoate = 3-methyl-2-oxobutanoate + H2O. It carries out the reaction (2R,3R)-2,3-dihydroxy-3-methylpentanoate = (S)-3-methyl-2-oxopentanoate + H2O. It participates in amino-acid biosynthesis; L-isoleucine biosynthesis; L-isoleucine from 2-oxobutanoate: step 3/4. It functions in the pathway amino-acid biosynthesis; L-valine biosynthesis; L-valine from pyruvate: step 3/4. Functionally, functions in the biosynthesis of branched-chain amino acids. Catalyzes the dehydration of (2R,3R)-2,3-dihydroxy-3-methylpentanoate (2,3-dihydroxy-3-methylvalerate) into 2-oxo-3-methylpentanoate (2-oxo-3-methylvalerate) and of (2R)-2,3-dihydroxy-3-methylbutanoate (2,3-dihydroxyisovalerate) into 2-oxo-3-methylbutanoate (2-oxoisovalerate), the penultimate precursor to L-isoleucine and L-valine, respectively. This Xanthomonas axonopodis pv. citri (strain 306) protein is Dihydroxy-acid dehydratase.